We begin with the raw amino-acid sequence, 194 residues long: Archaetidylinositol phosphate synthase (194 aa).

The next 2 helical transmembrane spans lie at 32–51 (IYTL…WLYI) and 58–78 (LLIA…RFTG). 4 residues coordinate Mg(2+): Asp67, Asp70, Asp88, and Asp92. Asp92 serves as the catalytic Proton acceptor. The next 3 helical transmembrane spans lie at 103–123 (LYIA…GLIV), 150–170 (IAIL…LALA), and 172–192 (AAAV…AGEL).

The protein belongs to the CDP-alcohol phosphatidyltransferase class-I family. It depends on Mn(2+) as a cofactor. The cofactor is Mg(2+).

The protein localises to the cell membrane. It carries out the reaction CDP-2,3-bis-O-(phytanyl)-sn-glycerol + 1D-myo-inositol 3-phosphate = saturated 1-archaetidyl-1D-myo-inositol 3-phosphate + CMP + H(+). The protein operates within lipid metabolism; phospholipid metabolism. Its function is as follows. Catalyzes the formation of archaetidylinositol phosphate (AIP) from CDP-archaeol (CDP-ArOH or CDP-2,3-bis-(O-phytanyl)-sn-glycerol) and 1L-myo-inositol 1-phosphate (IP or 1D-myo-inositol 3-phosphate). AIP is a precursor of archaetidyl-myo-inositol (AI), an ether-type inositol phospholipid ubiquitously distributed in archaea membranes and essential for glycolipid biosynthesis in archaea. The polypeptide is Archaetidylinositol phosphate synthase (Aeropyrum pernix (strain ATCC 700893 / DSM 11879 / JCM 9820 / NBRC 100138 / K1)).